Consider the following 266-residue polypeptide: NAD kinase 1 (266 aa).

Asp45 (proton acceptor) is an active-site residue. NAD(+)-binding positions include Asp45–Gly46, Asn122–Glu123, and Arg148. Position 150 (Asp150) interacts with ATP. NAD(+)-binding positions include Ser158 and Thr161 to Ala166.

This sequence belongs to the NAD kinase family. Homodimer. The cofactor is Ca(2+). Mn(2+) serves as cofactor.

It is found in the cytoplasm. The catalysed reaction is NAD(+) + ATP = ADP + NADP(+) + H(+). With respect to regulation, allosterically inhibited by NADP and activated by quinolinic acid. Strongly inhibited by HgCl(2). In terms of biological role, involved in the regulation of the intracellular balance of NAD and NADP, and is a key enzyme in the biosynthesis of NADP. Catalyzes specifically the phosphorylation on 2'-hydroxyl of the adenosine moiety of NAD to yield NADP. It can use ATP and other nucleoside triphosphates (GTP, UTP) as well as inorganic polyphosphate (poly(P)) as a source of phosphorus. This chain is NAD kinase 1 (ppnKA), found in Bacillus subtilis (strain 168).